Consider the following 466-residue polypeptide: Soluble pyridine nucleotide transhydrogenase (466 aa).

36 to 45 provides a ligand contact to FAD; it reads ERYHQVGGGC.

This sequence belongs to the class-I pyridine nucleotide-disulfide oxidoreductase family. FAD is required as a cofactor.

It localises to the cytoplasm. The enzyme catalyses NAD(+) + NADPH = NADH + NADP(+). Conversion of NADPH, generated by peripheral catabolic pathways, to NADH, which can enter the respiratory chain for energy generation. The chain is Soluble pyridine nucleotide transhydrogenase from Colwellia psychrerythraea (strain 34H / ATCC BAA-681) (Vibrio psychroerythus).